The sequence spans 240 residues: 6-carboxyhexanoate--CoA ligase (240 aa).

The protein belongs to the BioW family. Homodimer. Requires Mg(2+) as cofactor.

The catalysed reaction is heptanedioate + ATP + CoA = 6-carboxyhexanoyl-CoA + AMP + diphosphate. Its pathway is metabolic intermediate metabolism; pimeloyl-CoA biosynthesis; pimeloyl-CoA from pimelate: step 1/1. Its function is as follows. Catalyzes the transformation of pimelate into pimeloyl-CoA with concomitant hydrolysis of ATP to AMP. The protein is 6-carboxyhexanoate--CoA ligase of Aquifex aeolicus (strain VF5).